An 819-amino-acid polypeptide reads, in one-letter code: DNA topoisomerase 4 subunit A (819 aa).

The region spanning 30–496 (LPDIRDGLKP…QIIEIDTASL (467 aa)) is the Topo IIA-type catalytic domain. Tyrosine 118 (O-(5'-phospho-DNA)-tyrosine intermediate) is an active-site residue.

This sequence belongs to the type II topoisomerase GyrA/ParC subunit family. ParC type 2 subfamily. Heterotetramer composed of ParC and ParE.

Its subcellular location is the cell membrane. It carries out the reaction ATP-dependent breakage, passage and rejoining of double-stranded DNA.. Its function is as follows. Topoisomerase IV is essential for chromosome segregation. It relaxes supercoiled DNA. Performs the decatenation events required during the replication of a circular DNA molecule. The sequence is that of DNA topoisomerase 4 subunit A from Streptococcus pyogenes serotype M3 (strain ATCC BAA-595 / MGAS315).